The primary structure comprises 30 residues: Sillucin (30 aa).

4 disulfide bridges follow: Cys-2/Cys-7, Cys-12/Cys-24, Cys-13/Cys-30, and Cys-14/Cys-21.

The protein resides in the secreted. In terms of biological role, sillucin is an antimicrobial agent produced by the thermophilic fungus Rhizomucor pusillus in liquid culture; it is effective against Gram-positive bacteria at the level of RNA metabolism. The polypeptide is Sillucin (Rhizomucor pusillus).